The sequence spans 234 residues: MKFSPALQSATLILRYKRFLADVVTPAGEHLTLHCPNTGAMTGCATPGDTVWYSTSENLKRKYAHTWEITETQQGAFICVNTQRANQLVKEAIATHTIPELTGYGSIKGEVKYGEEGSRIDFMLQADDRPECYIEVKSVTLADRDNGYFPDAVTLRGQKHLRELMSVAATGKRAVLLFAVLHSAIERFSPARHIDPKYAQLLNEAQKQGVEILAYKAELSADNMTLKSTLPVVL.

This sequence belongs to the SfsA family.

This chain is Sugar fermentation stimulation protein homolog, found in Enterobacter sp. (strain 638).